A 30-amino-acid chain; its full sequence is Bacteriocin SRCAM 37 (30 aa).

This sequence belongs to the bacteriocin class IIA/YGNGV family.

It localises to the secreted. In terms of biological role, bacteriocin with antibacterial activity against C.jejuni. This chain is Bacteriocin SRCAM 37, found in Paenibacillus polymyxa (Bacillus polymyxa).